The primary structure comprises 682 residues: Potassium-transporting ATPase ATP-binding subunit (682 aa).

4 consecutive transmembrane segments (helical) span residues Pro-34–Ala-54, Ala-62–Ala-82, Ile-219–Leu-239, and Val-254–Ile-274. The active-site 4-aspartylphosphate intermediate is the Asp-307. ATP-binding positions include Asp-344, Glu-348, Phe-377–Ser-384, and Lys-395. Residues Asp-518 and Asp-522 each contribute to the Mg(2+) site. Helical transmembrane passes span Phe-588–Met-608, Ala-616–Leu-636, and Ile-656–Leu-676.

It belongs to the cation transport ATPase (P-type) (TC 3.A.3) family. Type IA subfamily. As to quaternary structure, the system is composed of three essential subunits: KdpA, KdpB and KdpC.

It is found in the cell inner membrane. It carries out the reaction K(+)(out) + ATP + H2O = K(+)(in) + ADP + phosphate + H(+). Functionally, part of the high-affinity ATP-driven potassium transport (or Kdp) system, which catalyzes the hydrolysis of ATP coupled with the electrogenic transport of potassium into the cytoplasm. This subunit is responsible for energy coupling to the transport system and for the release of the potassium ions to the cytoplasm. This Escherichia coli (strain ATCC 8739 / DSM 1576 / NBRC 3972 / NCIMB 8545 / WDCM 00012 / Crooks) protein is Potassium-transporting ATPase ATP-binding subunit.